Consider the following 465-residue polypeptide: Ribulose bisphosphate carboxylase large chain (465 aa).

Lys4 is subject to N6,N6,N6-trimethyllysine. Asn113 and Thr163 together coordinate substrate. The active-site Proton acceptor is Lys165. Lys167 provides a ligand contact to substrate. Mg(2+) contacts are provided by Lys191, Asp193, and Glu194. Residue Lys191 is modified to N6-carboxylysine. Catalysis depends on His284, which acts as the Proton acceptor. Substrate contacts are provided by Arg285, His317, and Ser369.

The protein belongs to the RuBisCO large chain family. Type I subfamily. In terms of assembly, heterohexadecamer of 8 large chains and 8 small chains; disulfide-linked. The disulfide link is formed within the large subunit homodimers. Mg(2+) is required as a cofactor. Post-translationally, the disulfide bond which can form in the large chain dimeric partners within the hexadecamer appears to be associated with oxidative stress and protein turnover.

The protein localises to the plastid. It is found in the chloroplast. The enzyme catalyses 2 (2R)-3-phosphoglycerate + 2 H(+) = D-ribulose 1,5-bisphosphate + CO2 + H2O. It carries out the reaction D-ribulose 1,5-bisphosphate + O2 = 2-phosphoglycolate + (2R)-3-phosphoglycerate + 2 H(+). Functionally, ruBisCO catalyzes two reactions: the carboxylation of D-ribulose 1,5-bisphosphate, the primary event in carbon dioxide fixation, as well as the oxidative fragmentation of the pentose substrate in the photorespiration process. Both reactions occur simultaneously and in competition at the same active site. The protein is Ribulose bisphosphate carboxylase large chain of Platytheca verticillata.